Consider the following 534-residue polypeptide: MPIKVLSSLDVARTQWYHFKAIIVAGMGLFTDAYDLFCIAPVMKMISHVYYNGDSINTAVLSTSYAIALLGTATGQLVFGYLGDRVGRRRVYGLCLIIMILSSFGCGFSVCTTRRSCVMVSLGFFRFFLGLGIGGDYPLSATIMSEFANKRTRGAFIAAVFSMQGLGILVSSAVTMAVCVAFKRSGGGLEVDAAAPTEADLAWRLILMIGALPAALTFYWRMLMPETARYTALVENNIVQAAKDMQRVMSRSHISDEATTDPPPPPPPPSYKLFSRCFFRLHGRDLFAASFNWFLVDIVFYTSNLLLSHIFSHYSKKPSTAENVYDAAFEVAELGAIIAACSTIPGYWFTVYFIDKIGRVKIQIMGFFFMAVIYLVAGIPYSWYWSKHEHNNKGFMVLYGLVFFFCNFGPNTTTFIIPAEHFPARFRSTCHGISGAAGKLGAIVGTVGFLWATKKMESDDKNQIYPEVNRMRIAFLILGGVCIAGILVTYFFTKETMGRSLEENEHDQDNNAESEDEPQIVDGQSSVSTLLQTR.

Topologically, residues 1 to 21 (MPIKVLSSLDVARTQWYHFKA) are cytoplasmic. The helical transmembrane segment at 22-42 (IIVAGMGLFTDAYDLFCIAPV) threads the bilayer. Topologically, residues 43-61 (MKMISHVYYNGDSINTAVL) are extracellular. The helical transmembrane segment at 62–82 (STSYAIALLGTATGQLVFGYL) threads the bilayer. Residues 83–90 (GDRVGRRR) lie on the Cytoplasmic side of the membrane. Residues 91–111 (VYGLCLIIMILSSFGCGFSVC) form a helical membrane-spanning segment. The Extracellular portion of the chain corresponds to 112–123 (TTRRSCVMVSLG). A helical transmembrane segment spans residues 124–144 (FFRFFLGLGIGGDYPLSATIM). The Cytoplasmic portion of the chain corresponds to 145–153 (SEFANKRTR). The chain crosses the membrane as a helical span at residues 154 to 174 (GAFIAAVFSMQGLGILVSSAV). At 175–199 (TMAVCVAFKRSGGGLEVDAAAPTEA) the chain is on the extracellular side. A helical transmembrane segment spans residues 200–220 (DLAWRLILMIGALPAALTFYW). At 221–281 (RMLMPETARY…KLFSRCFFRL (61 aa)) the chain is on the cytoplasmic side. The helical transmembrane segment at 282–302 (HGRDLFAASFNWFLVDIVFYT) threads the bilayer. Topologically, residues 303–333 (SNLLLSHIFSHYSKKPSTAENVYDAAFEVAE) are extracellular. A helical membrane pass occupies residues 334 to 354 (LGAIIAACSTIPGYWFTVYFI). Over 355–361 (DKIGRVK) the chain is Cytoplasmic. A helical transmembrane segment spans residues 362–382 (IQIMGFFFMAVIYLVAGIPYS). Residues 383–396 (WYWSKHEHNNKGFM) are Extracellular-facing. The chain crosses the membrane as a helical span at residues 397–417 (VLYGLVFFFCNFGPNTTTFII). Topologically, residues 418 to 431 (PAEHFPARFRSTCH) are cytoplasmic. Residues 432–452 (GISGAAGKLGAIVGTVGFLWA) traverse the membrane as a helical segment. The Extracellular portion of the chain corresponds to 453–472 (TKKMESDDKNQIYPEVNRMR). A helical transmembrane segment spans residues 473–493 (IAFLILGGVCIAGILVTYFFT). Residues 494-534 (KETMGRSLEENEHDQDNNAESEDEPQIVDGQSSVSTLLQTR) lie on the Cytoplasmic side of the membrane. A disordered region spans residues 501–534 (LEENEHDQDNNAESEDEPQIVDGQSSVSTLLQTR). The span at 510–519 (NNAESEDEPQ) shows a compositional bias: acidic residues. At Ser-514 the chain carries Phosphoserine. Positions 522 to 534 (DGQSSVSTLLQTR) are enriched in polar residues.

Belongs to the major facilitator superfamily. Phosphate:H(+) symporter (TC 2.A.1.9) family. As to expression, in roots.

Its subcellular location is the membrane. In terms of biological role, high-affinity transporter for external inorganic phosphate. The protein is Probable inorganic phosphate transporter 1-8 (PHT1-8) of Arabidopsis thaliana (Mouse-ear cress).